Consider the following 344-residue polypeptide: MQPMTRARIAVDAMGGDYAPDEIVAGALRASEELDADILLVGNPVPIQRYLDEHAPTAKPQIVAANDVVDMGEEPLSALKRKPKASINVAMDLVKAGAADAVVSAGHSGAAMAAALLRLGRLPGIDRPAIGAVLPTLLPGKSVLVLDVGANVDCRPKYLEQFAVMGSIYSQYVLDVENPKVGLLNIGEEDCKGNDLALKAHQLLRQNRQISFLGNAEGRDVLSGQFDVVVCDGFVGNVLLKFAESLGSVLVQILREELPRGWRGQLGTALLRPNLRKIKQRIDHAEHGGGLLLGVDGICIISHGSSQAPSIFNAIRLAKEAVDHRVSERIQACYQDAVAVEDQA.

This sequence belongs to the PlsX family. Homodimer. Probably interacts with PlsY.

Its subcellular location is the cytoplasm. The enzyme catalyses a fatty acyl-[ACP] + phosphate = an acyl phosphate + holo-[ACP]. Its pathway is lipid metabolism; phospholipid metabolism. In terms of biological role, catalyzes the reversible formation of acyl-phosphate (acyl-PO(4)) from acyl-[acyl-carrier-protein] (acyl-ACP). This enzyme utilizes acyl-ACP as fatty acyl donor, but not acyl-CoA. The sequence is that of Phosphate acyltransferase from Thermosynechococcus vestitus (strain NIES-2133 / IAM M-273 / BP-1).